Reading from the N-terminus, the 350-residue chain is Phosphoribosylformylglycinamidine cyclo-ligase (350 aa).

It belongs to the AIR synthase family.

Its subcellular location is the cytoplasm. The catalysed reaction is 2-formamido-N(1)-(5-O-phospho-beta-D-ribosyl)acetamidine + ATP = 5-amino-1-(5-phospho-beta-D-ribosyl)imidazole + ADP + phosphate + H(+). Its pathway is purine metabolism; IMP biosynthesis via de novo pathway; 5-amino-1-(5-phospho-D-ribosyl)imidazole from N(2)-formyl-N(1)-(5-phospho-D-ribosyl)glycinamide: step 2/2. In Pseudoalteromonas translucida (strain TAC 125), this protein is Phosphoribosylformylglycinamidine cyclo-ligase.